Here is a 381-residue protein sequence, read N- to C-terminus: Chaperone protein DnaJ (381 aa).

Residues 5–73 (DYYEVLGVGK…EKKAAYDQYG (69 aa)) enclose the J domain. A CR-type zinc finger spans residues 141-219 (GHEAQIRVPH…CHGQGKLKSQ (79 aa)). Residues Cys-154, Cys-157, Cys-171, Cys-174, Cys-193, Cys-196, Cys-207, and Cys-210 each contribute to the Zn(2+) site. 4 CXXCXGXG motif repeats span residues 154 to 161 (CDHCHGNG), 171 to 178 (CPTCHGAG), 193 to 200 (CPKCHGSG), and 207 to 214 (CTKCHGQG). The segment at 357 to 381 (SVHEGGSRHSPQEQSWLDKVKSFFS) is disordered.

Belongs to the DnaJ family. Homodimer. Requires Zn(2+) as cofactor.

The protein localises to the cytoplasm. In terms of biological role, participates actively in the response to hyperosmotic and heat shock by preventing the aggregation of stress-denatured proteins and by disaggregating proteins, also in an autonomous, DnaK-independent fashion. Unfolded proteins bind initially to DnaJ; upon interaction with the DnaJ-bound protein, DnaK hydrolyzes its bound ATP, resulting in the formation of a stable complex. GrpE releases ADP from DnaK; ATP binding to DnaK triggers the release of the substrate protein, thus completing the reaction cycle. Several rounds of ATP-dependent interactions between DnaJ, DnaK and GrpE are required for fully efficient folding. Also involved, together with DnaK and GrpE, in the DNA replication of plasmids through activation of initiation proteins. The protein is Chaperone protein DnaJ of Cupriavidus necator (strain ATCC 17699 / DSM 428 / KCTC 22496 / NCIMB 10442 / H16 / Stanier 337) (Ralstonia eutropha).